The chain runs to 415 residues: Esterase FrsA (415 aa).

Belongs to the FrsA family. In terms of assembly, monomer in solution. Homodimer. Forms a 1:1 complex with the unphosphorylated form of the EIIA component of the glucose-specific PTS system (IIAGlc).

It carries out the reaction a carboxylic ester + H2O = an alcohol + a carboxylate + H(+). Catalyzes the hydrolysis of esters. In vitro, prefers short chain alkanoate ester as substrate. Displays highest activity towards p-nitrophenyl acetate (pNPA). Has weaker activity towards p-nitrophenyl butyrate (pNPB). The sequence is that of Esterase FrsA from Vibrio vulnificus (strain CMCP6).